The chain runs to 644 residues: Exoribonuclease 2 (644 aa).

One can recognise an RNB domain in the interval 189 to 516; that stretch reads RQDLTALNFV…NHRLLKAVIK (328 aa). An S1 motif domain is found at 561–643; that stretch reads NTRFAAEIID…ETRSIIARPA (83 aa).

This sequence belongs to the RNR ribonuclease family. RNase II subfamily.

The protein localises to the cytoplasm. It carries out the reaction Exonucleolytic cleavage in the 3'- to 5'-direction to yield nucleoside 5'-phosphates.. In terms of biological role, involved in mRNA degradation. Hydrolyzes single-stranded polyribonucleotides processively in the 3' to 5' direction. The polypeptide is Exoribonuclease 2 (Salmonella enteritidis PT4 (strain P125109)).